The chain runs to 156 residues: S-ribosylhomocysteine lyase (156 aa).

Histidine 53, histidine 57, and cysteine 122 together coordinate Fe cation.

The protein belongs to the LuxS family. As to quaternary structure, homodimer. The cofactor is Fe cation.

The catalysed reaction is S-(5-deoxy-D-ribos-5-yl)-L-homocysteine = (S)-4,5-dihydroxypentane-2,3-dione + L-homocysteine. Functionally, involved in the synthesis of autoinducer 2 (AI-2) which is secreted by bacteria and is used to communicate both the cell density and the metabolic potential of the environment. The regulation of gene expression in response to changes in cell density is called quorum sensing. Catalyzes the transformation of S-ribosylhomocysteine (RHC) to homocysteine (HC) and 4,5-dihydroxy-2,3-pentadione (DPD). The chain is S-ribosylhomocysteine lyase from Finegoldia magna (strain ATCC 29328 / DSM 20472 / WAL 2508) (Peptostreptococcus magnus).